The following is a 590-amino-acid chain: Acetylcholinesterase (590 aa).

The signal sequence occupies residues 1–24; the sequence is MREMNLLVTSSLGVLLHLVVLCQA. Residue asparagine 83 is glycosylated (N-linked (GlcNAc...) asparagine). A disulfide bridge links cysteine 91 with cysteine 118. Residue serine 224 is the Acyl-ester intermediate of the active site. A disulfide bridge connects residues cysteine 278 and cysteine 289. Glutamate 351 serves as the catalytic Charge relay system. The cysteines at positions 426 and 545 are disulfide-linked. An N-linked (GlcNAc...) asparagine glycan is attached at asparagine 440. Catalysis depends on histidine 464, which acts as the Charge relay system. Residues asparagine 481 and asparagine 557 are each glycosylated (N-linked (GlcNAc...) asparagine). Serine 567 carries GPI-anchor amidated serine lipidation. The propeptide at 568 to 590 is removed in mature form; sequence SGTSSSKGIIFYVLFSILYLIFY.

The protein belongs to the type-B carboxylesterase/lipase family. Isoform H form is a homodimer; the asymmetric form is a disulfide-bonded oligomer composed of a collagenic subunit (Q) and a variable number of T catalytic subunits. An interchain disulfide bond is present in what becomes position 596 of the T isoform. As to expression, found in the synapses and to a lower extent in extrajunctional areas of muscle and nerve, and on erythrocyte membranes.

The protein resides in the cell membrane. It localises to the synapse. The catalysed reaction is acetylcholine + H2O = choline + acetate + H(+). Its function is as follows. Terminates signal transduction at the neuromuscular junction by rapid hydrolysis of the acetylcholine released into the synaptic cleft. May be involved in cell-cell interactions. The chain is Acetylcholinesterase (ache) from Torpedo marmorata (Marbled electric ray).